We begin with the raw amino-acid sequence, 620 residues long: Probable potassium transport system protein Kup 1 (620 aa).

12 helical membrane-spanning segments follow: residues L10 to L30, V50 to I70, M102 to I122, L138 to K158, F168 to V188, M211 to Y231, W246 to L266, M284 to I304, I336 to F356, I368 to M388, W393 to A413, and I415 to V435.

It belongs to the HAK/KUP transporter (TC 2.A.72) family.

It localises to the cell inner membrane. The enzyme catalyses K(+)(in) + H(+)(in) = K(+)(out) + H(+)(out). In terms of biological role, transport of potassium into the cell. Likely operates as a K(+):H(+) symporter. The chain is Probable potassium transport system protein Kup 1 from Rhodopseudomonas palustris (strain BisB18).